The sequence spans 432 residues: Phosphoribosylamine--glycine ligase (432 aa).

One can recognise an ATP-grasp domain in the interval 110–316 (RNFMKDNDIE…MIDVMSAVVN (207 aa)). An ATP-binding site is contributed by 137–194 (IEELGSVAIKPAGLTGGKGVKVMGDQLPDTGAAYDYAVSLLDGDNVVVEENLVGEEFT). Mg(2+) is bound by residues glutamine 274, glutamate 286, and asparagine 288. Positions 274, 286, and 288 each coordinate Mn(2+).

Belongs to the GARS family. Mg(2+) is required as a cofactor. It depends on Mn(2+) as a cofactor.

The catalysed reaction is 5-phospho-beta-D-ribosylamine + glycine + ATP = N(1)-(5-phospho-beta-D-ribosyl)glycinamide + ADP + phosphate + H(+). It participates in purine metabolism; IMP biosynthesis via de novo pathway; N(1)-(5-phospho-D-ribosyl)glycinamide from 5-phospho-alpha-D-ribose 1-diphosphate: step 2/2. The polypeptide is Phosphoribosylamine--glycine ligase (Methanococcoides burtonii (strain DSM 6242 / NBRC 107633 / OCM 468 / ACE-M)).